Consider the following 181-residue polypeptide: Protein Syd (181 aa).

It belongs to the Syd family.

The protein localises to the cell inner membrane. Its function is as follows. Interacts with the SecY protein in vivo. May bind preferentially to an uncomplexed state of SecY, thus functioning either as a chelating agent for excess SecY in the cell or as a regulatory factor that negatively controls the translocase function. This Shigella dysenteriae serotype 1 (strain Sd197) protein is Protein Syd.